Consider the following 384-residue polypeptide: N-acetylneuraminate epimerase (384 aa).

A signal peptide spans 1–24 (MMKTKYLLLPLLASSSLLSHMAFA). Kelch repeat units follow at residues 46–90 (KVYV…TVVG), 92–145 (NIFV…YSPD), 147–184 (KQVLFFGGYSKPLFDKYLADITRTDKKAQPEQWQKIVD), 185–230 (DYMG…VIDG), 233–281 (ITLI…IAGA), 303–352 (AQFE…SVKG), and 354–383 (VLMVGGERADRTASTKVYLVGLNNNQIDIV). The active-site Proton acceptor is Glu-239.

The protein belongs to the NanM family. In terms of assembly, homodimer.

It is found in the periplasm. It carries out the reaction N-acetyl-alpha-neuraminate = N-acetyl-beta-neuraminate. Its function is as follows. Converts alpha-N-acetylneuranimic acid (Neu5Ac) to the beta-anomer, accelerating the equilibrium between the alpha- and beta-anomers. Probably facilitates sialidase-negative bacteria to compete successfully for limited amounts of extracellular Neu5Ac, which is likely taken up in the beta-anomer. In addition, the rapid removal of sialic acid from solution might be advantageous to the bacterium to damp down host responses. The chain is N-acetylneuraminate epimerase from Vibrio vulnificus (strain YJ016).